A 456-amino-acid polypeptide reads, in one-letter code: MNVIEKLNSIQNKEMTAKENVENFIKVIDEKNEELNIFLEVNKESALKQAEAIDEKIANGEKVGFLSGLVFGIKANINVEDYIISAASKTLDNYFGSYNATVIDKILAQDGIILGITNMDEFAAGSSTETSCFGPTQNPAAPGRIPGGSSGGSAAAVAAEMCDIALGSDTGGSIRNPASHCGVVGFKPTYGAVSRQGLLDLSMSLDQIGPLSNDTSGIALALNAISDYDETECTTLHGKRPDFTSALEEKSLEGMKIAVCKEFIDVTDAEINVAVNKAIHKLVEAGAELVEVSFDNIDLCLPTYYLINYVEFFSATRKYDGRDYGYRIEDVCGEEVLRRIEIGSYISQKEYSGKFYKKALQARSLIRDEINAMLENVDLIVGPTVPKLPHKIGDELTPMEMYAYDVLTVIANLAGIPAGSIKAGEVDGIPVGLQIQAKPLDDLKIIKAMSVFENEN.

Active-site charge relay system residues include Lys74 and Ser149. Ser173 serves as the catalytic Acyl-ester intermediate.

Belongs to the amidase family. GatA subfamily. Heterotrimer of A, B and C subunits.

The enzyme catalyses L-glutamyl-tRNA(Gln) + L-glutamine + ATP + H2O = L-glutaminyl-tRNA(Gln) + L-glutamate + ADP + phosphate + H(+). In terms of biological role, allows the formation of correctly charged Gln-tRNA(Gln) through the transamidation of misacylated Glu-tRNA(Gln) in organisms which lack glutaminyl-tRNA synthetase. The reaction takes place in the presence of glutamine and ATP through an activated gamma-phospho-Glu-tRNA(Gln). In Methanobrevibacter smithii (strain ATCC 35061 / DSM 861 / OCM 144 / PS), this protein is Glutamyl-tRNA(Gln) amidotransferase subunit A.